We begin with the raw amino-acid sequence, 137 residues long: Proofreading thioesterase EntH (137 aa).

E63 serves as the catalytic Nucleophile or proton acceptor.

The protein belongs to the thioesterase PaaI family. As to quaternary structure, homotetramer. Dimer of dimers. Interacts specifically with the aryl carrier protein (ArCP) domain of EntB.

The protein localises to the cytoplasm. Its pathway is siderophore biosynthesis; enterobactin biosynthesis. Functionally, required for optimal enterobactin synthesis. Acts as a proofreading enzyme that prevents EntB misacylation by hydrolyzing the thioester bound existing between EntB and wrongly charged molecules. The polypeptide is Proofreading thioesterase EntH (Escherichia coli O6:H1 (strain CFT073 / ATCC 700928 / UPEC)).